A 142-amino-acid chain; its full sequence is Chorion class A protein Ld12 (142 aa).

An N-terminal signal peptide occupies residues 1-18 (MNSFALLLVCIQACLVQS).

Belongs to the chorion protein family.

Its function is as follows. This protein is one of many from the eggshell of the gypsy moth. This is Chorion class A protein Ld12 from Lymantria dispar (Gypsy moth).